Reading from the N-terminus, the 342-residue chain is Pyrophosphate--fructose 6-phosphate 1-phosphotransferase (342 aa).

Residue Gly10 coordinates diphosphate. Position 103 (Glu103) interacts with Mg(2+). Residues 126–128 (TID), Arg163, 170–172 (MGR), Glu222, Arg266, and 272–275 (HVQR) contribute to the substrate site. Asp128 serves as the catalytic Proton acceptor.

This sequence belongs to the phosphofructokinase type A (PFKA) family. Mixed-substrate PFK group III subfamily. Homodimer or homotetramer. Mg(2+) serves as cofactor.

The protein localises to the cytoplasm. The enzyme catalyses beta-D-fructose 6-phosphate + diphosphate = beta-D-fructose 1,6-bisphosphate + phosphate + H(+). It participates in carbohydrate degradation; glycolysis; D-glyceraldehyde 3-phosphate and glycerone phosphate from D-glucose: step 3/4. With respect to regulation, non-allosteric. Functionally, catalyzes the phosphorylation of D-fructose 6-phosphate, the first committing step of glycolysis. Uses inorganic phosphate (PPi) as phosphoryl donor instead of ATP like common ATP-dependent phosphofructokinases (ATP-PFKs), which renders the reaction reversible, and can thus function both in glycolysis and gluconeogenesis. Consistently, PPi-PFK can replace the enzymes of both the forward (ATP-PFK) and reverse (fructose-bisphosphatase (FBPase)) reactions. The sequence is that of Pyrophosphate--fructose 6-phosphate 1-phosphotransferase from Streptomyces coelicolor (strain ATCC BAA-471 / A3(2) / M145).